The sequence spans 855 residues: Envelope glycoprotein gp150 (855 aa).

Topologically, residues 1 to 784 are extracellular; the sequence is MAEGFAVNRQ…WLGNIPRYLK (784 aa). 17 N-linked (GlcNAc...) asparagine; by host glycosylation sites follow: N220, N258, N269, N274, N298, N330, N336, N342, N418, N422, N448, N469, N481, N499, N518, N531, and N548. A fusion peptide region spans residues 615-635; sequence VMLALATVLSMAGAGTGATAI. The stretch at 642–692 forms a coiled coil; that stretch reads HQVLATHQETIEKITEALKVNNLRLVTLEHQVLVIGLKVEAIEKFLYTAFA. The immunosuppression stretch occupies residues 661 to 679; the sequence is VNNLRLVTLEHQVLVIGLK. 3 N-linked (GlcNAc...) asparagine; by host glycosylation sites follow: N716, N720, and N736. Residues 735–771 adopt a coiled-coil conformation; it reads YNQTKDLQQKFYEIIMDMEQNNVQGRKGLQQLQEWED. The chain crosses the membrane as a helical span at residues 785 to 805; it reads GLLGGILGIGLGVLLLILCLP. Residues 806-855 are Cytoplasmic-facing; that stretch reads TLVDCIRNCISKVLGYTVIAMPEVEEEEIQPPMELRRNGRQCDMSEKEEE. Residues 835–855 are disordered; it reads QPPMELRRNGRQCDMSEKEEE.

As to quaternary structure, the mature envelope protein (Env) consists of a trimer of SU-TM heterodimers attached by noncovalent interactions or by a labile interchain disulfide bond. Specific enzymatic cleavages in vivo yield mature proteins. Envelope glycoproteins are synthesized as an inactive precursor that is N-glycosylated and processed likely by host cell furin or by a furin-like protease in the Golgi to yield the mature SU and TM proteins. The cleavage site between SU and TM requires the minimal sequence [KR]-X-[KR]-R.

The protein resides in the virion membrane. The protein localises to the host cell membrane. Functionally, the surface protein (SU) attaches the virus to the host cell by binding to its receptor. This interaction triggers the refolding of the transmembrane protein (TM) and is thought to activate its fusogenic potential by unmasking its fusion peptide. Fusion occurs at the host cell plasma membrane. Its function is as follows. The transmembrane protein (TM) acts as a class I viral fusion protein. Under the current model, the protein has at least 3 conformational states: pre-fusion native state, pre-hairpin intermediate state, and post-fusion hairpin state. During viral and target cell membrane fusion, the coiled coil regions (heptad repeats) assume a trimer-of-hairpins structure, positioning the fusion peptide in close proximity to the C-terminal region of the ectodomain. The formation of this structure appears to drive apposition and subsequent fusion of viral and target cell membranes. Membranes fusion leads to delivery of the nucleocapsid into the cytoplasm. The chain is Envelope glycoprotein gp150 (env) from Feline immunodeficiency virus (strain UK2) (FIV).